The chain runs to 93 residues: Late embryogenesis abundant protein B19.1A (93 aa).

A disordered region spans residues 1-93; the sequence is MASGQQERSQ…IDESKFKTKS (93 aa). Basic and acidic residues-rich tracts occupy residues 9–19 and 73–93; these read SQLDRKAREGE and GGERAAREGIDIDESKFKTKS.

Belongs to the small hydrophilic plant seed protein family. As to expression, embryos and young seedlings.

Lea proteins are late embryonic proteins abundant in higher plant seed embryos. It may have a role in desiccation tolerance by acting as an osmoprotective protein or as a desiccation-damage repair protein. In Hordeum vulgare (Barley), this protein is Late embryogenesis abundant protein B19.1A (B19.1A).